The following is a 347-amino-acid chain: O-methyltransferase aunE (347 aa).

W166 is a binding site for S-adenosyl-L-methionine. H265 serves as the catalytic Proton acceptor.

It belongs to the class I-like SAM-binding methyltransferase superfamily. Cation-independent O-methyltransferase family.

The protein operates within secondary metabolite biosynthesis. Functionally, O-methyltransferase; part of the gene cluster that mediates the biosynthesis of aurasperone B, a dimeric gamma-naphthopyrone. The first step in the biosynthesis of aurasperone B is the production of gamma-naphthopyrone precursor YWA1 by the non-reducing polyketide synthase albA, via condensation of one acetyl-CoA starter unit with 6 malonyl-CoA units. YWA1 is then methylated by aunE at position C-6 to yield foncesin which is further methylated at position C-8 by aunD to produce fonsecin B. A key enzyme in the biosynthetic pathway is the cytochrome P450 monooxygenase aunB which catalyzes the oxidative dimerization of fonsecin B to aurasperone B. AunB also catalyzes the oxidative dimerization of rubrofusarin B into aurasperone A. The chain is O-methyltransferase aunE from Aspergillus niger (strain ATCC 1015 / CBS 113.46 / FGSC A1144 / LSHB Ac4 / NCTC 3858a / NRRL 328 / USDA 3528.7).